Reading from the N-terminus, the 581-residue chain is ATP-dependent lipid A-core flippase (581 aa).

The next 5 helical transmembrane spans lie at 15–35 (LWPI…ALII), 62–82 (ISIW…SSGF), 152–172 (IIGL…VLII), 252–272 (IIIQ…SSLP), and 274–294 (IIDE…IALM). An ABC transmembrane type-1 domain is found at 27 to 309 (IISIVALIIN…LTNVNANFQK (283 aa)). Residues 341–577 (IKFKNITFTY…KGVYAQIYRL (237 aa)) form the ABC transporter domain. 375 to 382 (GSSGAGKS) is an ATP binding site.

This sequence belongs to the ABC transporter superfamily. Lipid exporter (TC 3.A.1.106) family. Homodimer.

It localises to the cell membrane. The catalysed reaction is ATP + H2O + lipid A-core oligosaccharideSide 1 = ADP + phosphate + lipid A-core oligosaccharideSide 2.. Its function is as follows. Involved in lipopolysaccharide (LPS) biosynthesis. Translocates lipid A-core from the inner to the outer leaflet of the inner membrane. Transmembrane domains (TMD) form a pore in the inner membrane and the ATP-binding domain (NBD) is responsible for energy generation. The sequence is that of ATP-dependent lipid A-core flippase from Wigglesworthia glossinidia brevipalpis.